The following is a 295-amino-acid chain: Ribosomal RNA small subunit methyltransferase H (295 aa).

Residues 35–37 (GGH), E55, F82, D103, and Q110 contribute to the S-adenosyl-L-methionine site.

Belongs to the methyltransferase superfamily. RsmH family.

The protein resides in the cytoplasm. The enzyme catalyses cytidine(1402) in 16S rRNA + S-adenosyl-L-methionine = N(4)-methylcytidine(1402) in 16S rRNA + S-adenosyl-L-homocysteine + H(+). In terms of biological role, specifically methylates the N4 position of cytidine in position 1402 (C1402) of 16S rRNA. The sequence is that of Ribosomal RNA small subunit methyltransferase H from Desulfotalea psychrophila (strain LSv54 / DSM 12343).